The primary structure comprises 589 residues: Early growth response protein 4 (589 aa).

Disordered stretches follow at residues Gly-29–Arg-101, Ala-383–Gln-411, and Pro-436–Gly-466. A compositionally biased stretch (pro residues) spans Pro-76–Arg-86. A compositionally biased stretch (basic residues) spans Ala-92–Arg-101. Gly residues predominate over residues Gly-395 to Gly-404. A compositionally biased stretch (pro residues) spans Pro-444–Phe-454. 3 C2H2-type zinc fingers span residues Phe-483–His-507, Phe-513–His-535, and Phe-541–His-563.

This sequence belongs to the EGR C2H2-type zinc-finger protein family.

Its subcellular location is the nucleus. Its function is as follows. Transcriptional regulator. Recognizes and binds to the DNA sequence 5'-GCGGGGGCG-3' (GSG). Activates the transcription of target genes whose products are required for mitogenesis and differentiation. This chain is Early growth response protein 4 (EGR4), found in Homo sapiens (Human).